The sequence spans 127 residues: Fluoride-specific ion channel FluC (127 aa).

Transmembrane regions (helical) follow at residues 1 to 21 (MPQG…GACL), 39 to 59 (FGTL…YGVI), 72 to 92 (LIGV…VETL), and 105 to 125 (ANVF…IELM). Gly-79 and Thr-82 together coordinate Na(+).

The protein belongs to the fluoride channel Fluc/FEX (TC 1.A.43) family.

Its subcellular location is the cell inner membrane. It carries out the reaction fluoride(in) = fluoride(out). Its activity is regulated as follows. Na(+) is not transported, but it plays an essential structural role and its presence is essential for fluoride channel function. Fluoride-specific ion channel. Important for reducing fluoride concentration in the cell, thus reducing its toxicity. The chain is Fluoride-specific ion channel FluC from Alteromonas mediterranea (strain DSM 17117 / CIP 110805 / LMG 28347 / Deep ecotype).